The primary structure comprises 425 residues: Serine--tRNA ligase (425 aa).

230 to 232 (TAE) lines the L-serine pocket. Position 261–263 (261–263 (RSE)) interacts with ATP. L-serine is bound at residue Glu-284. 348 to 351 (EISS) serves as a coordination point for ATP. Position 384 (Ser-384) interacts with L-serine.

This sequence belongs to the class-II aminoacyl-tRNA synthetase family. Type-1 seryl-tRNA synthetase subfamily. Homodimer. The tRNA molecule binds across the dimer.

The protein resides in the cytoplasm. The catalysed reaction is tRNA(Ser) + L-serine + ATP = L-seryl-tRNA(Ser) + AMP + diphosphate + H(+). It catalyses the reaction tRNA(Sec) + L-serine + ATP = L-seryl-tRNA(Sec) + AMP + diphosphate + H(+). It participates in aminoacyl-tRNA biosynthesis; selenocysteinyl-tRNA(Sec) biosynthesis; L-seryl-tRNA(Sec) from L-serine and tRNA(Sec): step 1/1. In terms of biological role, catalyzes the attachment of serine to tRNA(Ser). Is also able to aminoacylate tRNA(Sec) with serine, to form the misacylated tRNA L-seryl-tRNA(Sec), which will be further converted into selenocysteinyl-tRNA(Sec). The protein is Serine--tRNA ligase of Streptococcus pyogenes serotype M4 (strain MGAS10750).